Consider the following 122-residue polypeptide: Spermidine export protein MdtJ (122 aa).

Transmembrane regions (helical) follow at residues 1-21, 31-51, 54-74, and 81-101; these read MIYW…TLSM, TGHI…SMAV, VALG…ITLF, and EPIS…IMLV.

This sequence belongs to the drug/metabolite transporter (DMT) superfamily. Small multidrug resistance (SMR) (TC 2.A.7.1) family. MdtJ subfamily. Forms a complex with MdtI.

The protein resides in the cell inner membrane. Functionally, catalyzes the excretion of spermidine. This chain is Spermidine export protein MdtJ, found in Serratia proteamaculans (strain 568).